The sequence spans 199 residues: Recombination protein RecR (199 aa).

The segment at 58-73 (CSICNNITDVDPCTYC) adopts a C4-type zinc-finger fold. Positions 81-176 (QVICVVEEPT…RVTRIATGVP (96 aa)) constitute a Toprim domain.

Belongs to the RecR family.

Functionally, may play a role in DNA repair. It seems to be involved in an RecBC-independent recombinational process of DNA repair. It may act with RecF and RecO. This Koribacter versatilis (strain Ellin345) protein is Recombination protein RecR.